The following is a 187-amino-acid chain: Shikimate kinase (187 aa).

18–23 (GCGKST) contributes to the ATP binding site. Ser-22 is a binding site for Mg(2+). The substrate site is built by Asp-40, Arg-64, and Gly-86. Arg-128 contacts ATP. Residue Arg-147 coordinates substrate. Arg-164 is an ATP binding site.

It belongs to the shikimate kinase family. In terms of assembly, monomer. Mg(2+) is required as a cofactor.

Its subcellular location is the cytoplasm. It carries out the reaction shikimate + ATP = 3-phosphoshikimate + ADP + H(+). It functions in the pathway metabolic intermediate biosynthesis; chorismate biosynthesis; chorismate from D-erythrose 4-phosphate and phosphoenolpyruvate: step 5/7. In terms of biological role, catalyzes the specific phosphorylation of the 3-hydroxyl group of shikimic acid using ATP as a cosubstrate. In Rhodopirellula baltica (strain DSM 10527 / NCIMB 13988 / SH1), this protein is Shikimate kinase.